The following is a 345-amino-acid chain: Golgi-associated RAB2 interactor protein 1B (345 aa).

Disordered regions lie at residues 222–241 (CSPSGDSQLVQKKPQASQPS) and 271–299 (SRSSKKTENKKDSSGKKTSPSEDSIPCTR). Over residues 275–285 (KKTENKKDSSG) the composition is skewed to basic and acidic residues.

It belongs to the GARIN family.

It localises to the golgi apparatus. Its function is as follows. RAB2B effector protein required for accurate acrosome formation and normal male fertility. In complex with RAB2A/RAB2B, seems to suppress excessive vesicle trafficking during acrosome formation. The chain is Golgi-associated RAB2 interactor protein 1B (GARIN1B) from Bos taurus (Bovine).